We begin with the raw amino-acid sequence, 351 residues long: Phenylalanine--tRNA ligase alpha subunit (351 aa).

The tract at residues 45–69 (LGDDAPIPAARRSLGSLPKDQRKDA) is disordered. A Mg(2+)-binding site is contributed by glutamate 269.

It belongs to the class-II aminoacyl-tRNA synthetase family. Phe-tRNA synthetase alpha subunit type 1 subfamily. Tetramer of two alpha and two beta subunits. It depends on Mg(2+) as a cofactor.

The protein localises to the cytoplasm. The enzyme catalyses tRNA(Phe) + L-phenylalanine + ATP = L-phenylalanyl-tRNA(Phe) + AMP + diphosphate + H(+). The chain is Phenylalanine--tRNA ligase alpha subunit from Corynebacterium jeikeium (strain K411).